The sequence spans 340 residues: Holliday junction branch migration complex subunit RuvB (340 aa).

Positions 4–184 (TDRIVGGQSL…FGIVQRLEFY (181 aa)) are large ATPase domain (RuvB-L). ATP is bound by residues Arg24, Gly65, Lys68, Thr69, Thr70, 131 to 133 (EDF), Arg174, Tyr184, and Arg221. Thr69 contacts Mg(2+). Residues 185–255 (SIEELAQIVT…IADLALNLLE (71 aa)) form a small ATPAse domain (RuvB-S) region. Residues 258-340 (PLGLDKMDRR…TMPERNLEDE (83 aa)) form a head domain (RuvB-H) region. Residues Arg294, Arg313, and Arg318 each coordinate DNA.

Belongs to the RuvB family. Homohexamer. Forms an RuvA(8)-RuvB(12)-Holliday junction (HJ) complex. HJ DNA is sandwiched between 2 RuvA tetramers; dsDNA enters through RuvA and exits via RuvB. An RuvB hexamer assembles on each DNA strand where it exits the tetramer. Each RuvB hexamer is contacted by two RuvA subunits (via domain III) on 2 adjacent RuvB subunits; this complex drives branch migration. In the full resolvosome a probable DNA-RuvA(4)-RuvB(12)-RuvC(2) complex forms which resolves the HJ.

It localises to the cytoplasm. It catalyses the reaction ATP + H2O = ADP + phosphate + H(+). Its function is as follows. The RuvA-RuvB-RuvC complex processes Holliday junction (HJ) DNA during genetic recombination and DNA repair, while the RuvA-RuvB complex plays an important role in the rescue of blocked DNA replication forks via replication fork reversal (RFR). RuvA specifically binds to HJ cruciform DNA, conferring on it an open structure. The RuvB hexamer acts as an ATP-dependent pump, pulling dsDNA into and through the RuvAB complex. RuvB forms 2 homohexamers on either side of HJ DNA bound by 1 or 2 RuvA tetramers; 4 subunits per hexamer contact DNA at a time. Coordinated motions by a converter formed by DNA-disengaged RuvB subunits stimulates ATP hydrolysis and nucleotide exchange. Immobilization of the converter enables RuvB to convert the ATP-contained energy into a lever motion, pulling 2 nucleotides of DNA out of the RuvA tetramer per ATP hydrolyzed, thus driving DNA branch migration. The RuvB motors rotate together with the DNA substrate, which together with the progressing nucleotide cycle form the mechanistic basis for DNA recombination by continuous HJ branch migration. Branch migration allows RuvC to scan DNA until it finds its consensus sequence, where it cleaves and resolves cruciform DNA. This is Holliday junction branch migration complex subunit RuvB from Hydrogenovibrio crunogenus (strain DSM 25203 / XCL-2) (Thiomicrospira crunogena).